The chain runs to 319 residues: ATP-dependent 6-phosphofructokinase (319 aa).

Residue Gly11 coordinates ATP. 21–25 (RAVVR) is an ADP binding site. Residues 72–73 (RC) and 102–105 (GDGS) contribute to the ATP site. A Mg(2+)-binding site is contributed by Asp103. 125–127 (TID) serves as a coordination point for substrate. Asp127 serves as the catalytic Proton acceptor. An ADP-binding site is contributed by Arg154. Substrate-binding positions include Arg162 and 169–171 (MGR). ADP-binding positions include 185-187 (GAE), Arg211, and 213-215 (KKH). Substrate-binding positions include Glu222, Arg243, and 249-252 (HVQR).

Belongs to the phosphofructokinase type A (PFKA) family. ATP-dependent PFK group I subfamily. Prokaryotic clade 'B1' sub-subfamily. Homotetramer. It depends on Mg(2+) as a cofactor.

The protein localises to the cytoplasm. It carries out the reaction beta-D-fructose 6-phosphate + ATP = beta-D-fructose 1,6-bisphosphate + ADP + H(+). It participates in carbohydrate degradation; glycolysis; D-glyceraldehyde 3-phosphate and glycerone phosphate from D-glucose: step 3/4. Allosterically activated by ADP and other diphosphonucleosides, and allosterically inhibited by phosphoenolpyruvate. Catalyzes the phosphorylation of D-fructose 6-phosphate to fructose 1,6-bisphosphate by ATP, the first committing step of glycolysis. The polypeptide is ATP-dependent 6-phosphofructokinase (Geobacillus kaustophilus (strain HTA426)).